The following is a 314-amino-acid chain: Vacuolar membrane protein SCRG_03194 (314 aa).

Residues lysine 32–alanine 60 form a disordered region. A helical membrane pass occupies residues valine 93–leucine 113. 3 positions are modified to phosphoserine: serine 148, serine 254, and serine 274. Positions glutamate 240–asparagine 309 are disordered. Positions serine 254–histidine 269 are enriched in basic and acidic residues.

Belongs to the PRM5 family.

It localises to the vacuole membrane. The polypeptide is Vacuolar membrane protein SCRG_03194 (Saccharomyces cerevisiae (strain RM11-1a) (Baker's yeast)).